A 340-amino-acid chain; its full sequence is Phenylalanine--tRNA ligase alpha subunit (340 aa).

A Mg(2+)-binding site is contributed by glutamate 255.

It belongs to the class-II aminoacyl-tRNA synthetase family. Phe-tRNA synthetase alpha subunit type 1 subfamily. Tetramer of two alpha and two beta subunits. It depends on Mg(2+) as a cofactor.

The protein localises to the cytoplasm. The enzyme catalyses tRNA(Phe) + L-phenylalanine + ATP = L-phenylalanyl-tRNA(Phe) + AMP + diphosphate + H(+). The protein is Phenylalanine--tRNA ligase alpha subunit of Exiguobacterium sp. (strain ATCC BAA-1283 / AT1b).